Consider the following 83-residue polypeptide: UPF0270 protein CGSHiEE_07180 (83 aa).

It belongs to the UPF0270 family.

The chain is UPF0270 protein CGSHiEE_07180 from Haemophilus influenzae (strain PittEE).